The following is a 318-amino-acid chain: Beta-galactosidase small subunit (318 aa).

This sequence belongs to the bacterial beta-galactosidase small subunit family. In terms of assembly, heterodimer of a large (LacL) and a small subunit (LacM).

The enzyme catalyses Hydrolysis of terminal non-reducing beta-D-galactose residues in beta-D-galactosides.. Component of a beta-galactosidase. The chain is Beta-galactosidase small subunit from Latilactobacillus sakei (Lactobacillus sakei).